The sequence spans 862 residues: DNA mismatch repair protein MutS (862 aa).

Gly-608 to Ser-615 contacts ATP.

This sequence belongs to the DNA mismatch repair MutS family.

In terms of biological role, this protein is involved in the repair of mismatches in DNA. It is possible that it carries out the mismatch recognition step. This protein has a weak ATPase activity. The sequence is that of DNA mismatch repair protein MutS from Bacteroides thetaiotaomicron (strain ATCC 29148 / DSM 2079 / JCM 5827 / CCUG 10774 / NCTC 10582 / VPI-5482 / E50).